The chain runs to 98 residues: Pore-forming peptide amoebapore A (98 aa).

The N-terminal stretch at 1 to 21 (MKAIVFVLIFAVAFAVTATHQ) is a signal peptide. A Saposin B-type domain is found at 22-98 (GEILCNLCTG…NAICAKIHAC (77 aa)). Disulfide bonds link cysteine 26–cysteine 98, cysteine 29–cysteine 92, and cysteine 56–cysteine 67.

In terms of assembly, monomer (at pH below 4 and pH above 6). Homodimer (at pH 4-6). Hexamer; formed during insertion in the membrane.

The protein resides in the cytoplasmic granule. Functionally, forms pores in the cell membrane of host cells. Has antibacterial activity against M.luteus, no activity against E.coli. Implicated in the cytolytic activity of the parasite. The polypeptide is Pore-forming peptide amoebapore A (Entamoeba histolytica (strain ATCC 30459 / HM-1:IMSS / ABRM)).